Here is a 157-residue protein sequence, read N- to C-terminus: Cyclic pyranopterin monophosphate synthase (157 aa).

Residues 74 to 76 (MCH) and 112 to 113 (ME) contribute to the substrate site. The active site involves Asp-127.

This sequence belongs to the MoaC family. In terms of assembly, homohexamer; trimer of dimers.

The catalysed reaction is (8S)-3',8-cyclo-7,8-dihydroguanosine 5'-triphosphate = cyclic pyranopterin phosphate + diphosphate. It functions in the pathway cofactor biosynthesis; molybdopterin biosynthesis. Functionally, catalyzes the conversion of (8S)-3',8-cyclo-7,8-dihydroguanosine 5'-triphosphate to cyclic pyranopterin monophosphate (cPMP). The chain is Cyclic pyranopterin monophosphate synthase from Campylobacter jejuni (strain RM1221).